The primary structure comprises 1103 residues: Bifunctional cytochrome P450/NADPH--P450 reductase (1103 aa).

Residues 1–491 are cytochrome P450; sequence MSTPKAEPVP…SSSEHADHAA (491 aa). Cys415 is a binding site for heme. Residues 492-1103 form an NADPH--P450 reductase region; it reads GHGKAGAAKK…KERYTTDIFA (612 aa). The Flavodoxin-like domain occupies 508-649; that stretch reads MHVYYGSNTG…DFDTWGETSF (142 aa). FMN contacts are provided by residues 514-519, 561-564, Cys596, and Thr604; these read SNTGTC and SYEG. Residues 685–924 enclose the FAD-binding FR-type domain; that stretch reads LQLQEGLVVE…RPSHTGFKPP (240 aa).

In the N-terminal section; belongs to the cytochrome P450 family. It depends on heme as a cofactor. The cofactor is FAD. FMN is required as a cofactor.

The enzyme catalyses 2 oxidized [cytochrome P450] + NADPH = 2 reduced [cytochrome P450] + NADP(+) + H(+). It catalyses the reaction an organic molecule + reduced [NADPH--hemoprotein reductase] + O2 = an alcohol + oxidized [NADPH--hemoprotein reductase] + H2O + H(+). Its function is as follows. Functions as a fatty acid monooxygenase. Also displays a NADPH-dependent reductase activity in the C-terminal domain, which allows electron transfer from NADPH to the heme iron of the cytochrome P450 N-terminal domain. This Aspergillus oryzae (strain ATCC 42149 / RIB 40) (Yellow koji mold) protein is Bifunctional cytochrome P450/NADPH--P450 reductase.